The primary structure comprises 102 residues: Small ribosomal subunit protein uS10 (102 aa).

Belongs to the universal ribosomal protein uS10 family. As to quaternary structure, part of the 30S ribosomal subunit.

Its function is as follows. Involved in the binding of tRNA to the ribosomes. The polypeptide is Small ribosomal subunit protein uS10 (Bifidobacterium animalis subsp. lactis (strain AD011)).